Here is a 99-residue protein sequence, read N- to C-terminus: Large ribosomal subunit protein bL27 (99 aa).

A propeptide spanning residues M1–F12 is cleaved from the precursor. The disordered stretch occupies residues H15–R36.

It belongs to the bacterial ribosomal protein bL27 family. Post-translationally, the N-terminus is cleaved by ribosomal processing cysteine protease Prp.

In Lactobacillus johnsonii (strain CNCM I-12250 / La1 / NCC 533), this protein is Large ribosomal subunit protein bL27.